A 275-amino-acid chain; its full sequence is Large ribosomal subunit protein uL2 (275 aa).

Residues 222 to 257 (GTAMNAVDHPHGGGRGRSKGNNQPRSPWNQPAKGFK) form a disordered region. The span at 240–250 (KGNNQPRSPWN) shows a compositional bias: polar residues.

It belongs to the universal ribosomal protein uL2 family. In terms of assembly, part of the 50S ribosomal subunit. Forms a bridge to the 30S subunit in the 70S ribosome.

Functionally, one of the primary rRNA binding proteins. Required for association of the 30S and 50S subunits to form the 70S ribosome, for tRNA binding and peptide bond formation. It has been suggested to have peptidyltransferase activity; this is somewhat controversial. Makes several contacts with the 16S rRNA in the 70S ribosome. This chain is Large ribosomal subunit protein uL2, found in Endomicrobium trichonymphae.